The following is a 1512-amino-acid chain: DNA (cytosine-5)-methyltransferase 2 (1512 aa).

Residues 1–22 (METKVGKQKKRSVDSNDDVSKE) are compositionally biased toward basic and acidic residues. 2 disordered regions span residues 1 to 35 (METKVGKQKKRSVDSNDDVSKERRPKRAAACRNFK) and 634 to 678 (AIHE…GNSE). Acidic residues predominate over residues 638 to 662 (VEEEEIEEDEEEDENEEDDIEEEAV). BAH domains lie at 707-841 (ETVA…FSLP) and 909-1026 (TTLK…KQFP). The 435-residue stretch at 1071 to 1505 (LATLDIFAGC…RKLKEALYLK (435 aa)) folds into the SAM-dependent MTase C5-type domain. Cys-1176 is an active-site residue.

This sequence belongs to the class I-like SAM-binding methyltransferase superfamily. C5-methyltransferase family. As to expression, expressed at low levels in vegetative and floral organs.

It is found in the nucleus. It carries out the reaction a 2'-deoxycytidine in DNA + S-adenosyl-L-methionine = a 5-methyl-2'-deoxycytidine in DNA + S-adenosyl-L-homocysteine + H(+). In terms of biological role, maintains chromatin CpG methylation that plays a role in genomic imprinting, regulation of embryogenesis and seed viability. Required for proper patterns of CG DNA methylation in dividing cells. This is DNA (cytosine-5)-methyltransferase 2 (MET2) from Arabidopsis thaliana (Mouse-ear cress).